The chain runs to 146 residues: Hemoglobin subunit beta (146 aa).

N-acetylvaline is present on Val-1. The region spanning 2–146 is the Globin domain; that stretch reads HLTAAEKSAI…VANALAHKYH (145 aa). His-63 contacts heme b. At Lys-82 the chain carries N6-acetyllysine. Heme b is bound at residue His-92. S-nitrosocysteine is present on Cys-93. N6-acetyllysine is present on Lys-144.

This sequence belongs to the globin family. As to quaternary structure, heterotetramer of two alpha chains and two beta chains. Red blood cells.

Its function is as follows. Involved in oxygen transport from the lung to the various peripheral tissues. The protein is Hemoglobin subunit beta (HBB) of Cavia porcellus (Guinea pig).